A 395-amino-acid chain; its full sequence is ETS-related transcription factor Elf-3 (395 aa).

A PNT domain is found at 69-155; sequence EPPAVLHLAE…AQLRDLTSSS (87 aa). Residues 200-240 show a composition bias toward low complexity; the sequence is ASPYYGSSYGPGAPSPGSSDFSTSGTDTPQSSHSSDSGGSD. The disordered stretch occupies residues 200–275; sequence ASPYYGSSYG…HGKRKRGRPR (76 aa). The segment covering 246–265 has biased composition (basic and acidic residues); sequence TDSKVFPRDGFPDYKKGEPK. Residues 266–275 show a composition bias toward basic residues; sequence HGKRKRGRPR. The segment at residues 297–379 is a DNA-binding region (ETS); the sequence is THLWEFIRDI…DGRRLVYKFG (83 aa).

This sequence belongs to the ETS family. Interacts with TBP. Interacts with CREBBP and EP300; these act as transcriptional coactivators of ELF3 and positively modulate its function. Interacts with XRCC5/KU86 and XRCC6/KU70; these inhibit the ability of ELF3 to bind DNA and negatively modulate its transcriptional activity. Associated with CLND7 and POU2F3. Interacts with ZNF768.

Its subcellular location is the cytoplasm. It localises to the nucleus. Transcriptional activator that binds and transactivates ETS sequences containing the consensus nucleotide core sequence GGA[AT]. Acts synergistically with POU2F3 to transactivate the SPRR2A promoter and with RUNX1 to transactivate the ANGPT1 promoter. Also transactivates collagenase, CCL20, CLND7, FLG, KRT8, NOS2, PTGS2, SPRR2B, TGFBR2 and TGM3 promoters. Represses KRT4 promoter activity. Involved in mediating vascular inflammation. May play an important role in epithelial cell differentiation and tumorigenesis. May be a critical downstream effector of the ERBB2 signaling pathway. May be associated with mammary gland development and involution. Plays an important role in the regulation of transcription with TATA-less promoters in preimplantation embryos, which is essential in preimplantation development. The sequence is that of ETS-related transcription factor Elf-3 from Rattus norvegicus (Rat).